We begin with the raw amino-acid sequence, 152 residues long: Large ribosomal subunit protein bL9 (152 aa).

This sequence belongs to the bacterial ribosomal protein bL9 family.

In terms of biological role, binds to the 23S rRNA. The chain is Large ribosomal subunit protein bL9 from Trichormus variabilis (strain ATCC 29413 / PCC 7937) (Anabaena variabilis).